Reading from the N-terminus, the 267-residue chain is Putative methylsterol monooxygenase DDB_G0270946 (267 aa).

Transmembrane regions (helical) follow at residues 31-51 (FIAH…ADFI), 72-92 (YCAI…MYIF), and 110-130 (IPYL…YFYW). In terms of domain architecture, Fatty acid hydroxylase spans 119-249 (SSFIIEDFYF…FTYLDKIFGT (131 aa)). Residues 132–136 (HRALH) carry the Histidine box-1 motif. The Histidine box-2 motif lies at 145–149 (HKVHH). The short motif at 224-230 (FHDYHHE) is the Histidine box-3 element.

This sequence belongs to the sterol desaturase family. Fe cation serves as cofactor.

The protein localises to the endoplasmic reticulum membrane. The catalysed reaction is 4,4-dimethyl-5alpha-cholest-7-en-3beta-ol + 6 Fe(II)-[cytochrome b5] + 3 O2 + 5 H(+) = 4alpha-carboxy-4beta-methyl-5alpha-cholest-7-ene-3beta-ol + 6 Fe(III)-[cytochrome b5] + 4 H2O. The protein operates within steroid biosynthesis; zymosterol biosynthesis; zymosterol from lanosterol: step 3/6. The chain is Putative methylsterol monooxygenase DDB_G0270946 from Dictyostelium discoideum (Social amoeba).